The chain runs to 125 residues: Succinate dehydrogenase assembly factor 3, mitochondrial (125 aa).

A mitochondrion-targeting transit peptide spans 1–30 (MPGKHVSRVRALYRRILLLHRALPPDLKAL).

The protein belongs to the complex I LYR family. SDHAF3 subfamily. In terms of assembly, interacts with Sdhb within an Sdha-Sdhb subcomplex.

The protein localises to the mitochondrion matrix. In terms of biological role, plays an essential role in the assembly of succinate dehydrogenase (SDH), an enzyme complex (also referred to as respiratory complex II) that is a component of both the tricarboxylic acid (TCA) cycle and the mitochondrial electron transport chain, and which couples the oxidation of succinate to fumarate with the reduction of ubiquinone (coenzyme Q) to ubiquinol. Promotes maturation of the iron-sulfur protein subunit Sdhb of the SDH catalytic dimer, protecting it from the deleterious effects of oxidants. May act together with SDHAF1. In Mus musculus (Mouse), this protein is Succinate dehydrogenase assembly factor 3, mitochondrial.